The chain runs to 442 residues: Probable glycine dehydrogenase (decarboxylating) subunit 1 (442 aa).

The protein belongs to the GcvP family. N-terminal subunit subfamily. In terms of assembly, the glycine cleavage system is composed of four proteins: P, T, L and H. In this organism, the P 'protein' is a heterodimer of two subunits.

The enzyme catalyses N(6)-[(R)-lipoyl]-L-lysyl-[glycine-cleavage complex H protein] + glycine + H(+) = N(6)-[(R)-S(8)-aminomethyldihydrolipoyl]-L-lysyl-[glycine-cleavage complex H protein] + CO2. Functionally, the glycine cleavage system catalyzes the degradation of glycine. The P protein binds the alpha-amino group of glycine through its pyridoxal phosphate cofactor; CO(2) is released and the remaining methylamine moiety is then transferred to the lipoamide cofactor of the H protein. The polypeptide is Probable glycine dehydrogenase (decarboxylating) subunit 1 (Geotalea uraniireducens (strain Rf4) (Geobacter uraniireducens)).